Here is a 375-residue protein sequence, read N- to C-terminus: Erythronate-4-phosphate dehydrogenase (375 aa).

Ser-49 provides a ligand contact to substrate. NAD(+) contacts are provided by Asp-150 and Thr-178. Arg-211 is a catalytic residue. Asp-231 provides a ligand contact to NAD(+). Glu-236 is a catalytic residue. His-253 (proton donor) is an active-site residue. Gly-256 lines the NAD(+) pocket.

This sequence belongs to the D-isomer specific 2-hydroxyacid dehydrogenase family. PdxB subfamily. As to quaternary structure, homodimer.

Its subcellular location is the cytoplasm. The catalysed reaction is 4-phospho-D-erythronate + NAD(+) = (R)-3-hydroxy-2-oxo-4-phosphooxybutanoate + NADH + H(+). It functions in the pathway cofactor biosynthesis; pyridoxine 5'-phosphate biosynthesis; pyridoxine 5'-phosphate from D-erythrose 4-phosphate: step 2/5. Its function is as follows. Catalyzes the oxidation of erythronate-4-phosphate to 3-hydroxy-2-oxo-4-phosphonooxybutanoate. The polypeptide is Erythronate-4-phosphate dehydrogenase (Hydrogenovibrio crunogenus (strain DSM 25203 / XCL-2) (Thiomicrospira crunogena)).